The following is a 168-amino-acid chain: Large ribosomal subunit protein uL5 (168 aa).

Belongs to the universal ribosomal protein uL5 family. As to quaternary structure, part of the 50S ribosomal subunit; contacts the 5S rRNA and probably tRNA. Forms a bridge to the 30S subunit in the 70S ribosome.

This is one of the proteins that bind and probably mediate the attachment of the 5S RNA into the large ribosomal subunit, where it forms part of the central protuberance. In the 70S ribosome it contacts protein S13 of the 30S subunit (bridge B1b), connecting the 2 subunits; this bridge is implicated in subunit movement. May contact the P site tRNA; the 5S rRNA and some of its associated proteins might help stabilize positioning of ribosome-bound tRNAs. In Methanosphaera stadtmanae (strain ATCC 43021 / DSM 3091 / JCM 11832 / MCB-3), this protein is Large ribosomal subunit protein uL5.